The primary structure comprises 649 residues: Acetyl-coenzyme A synthetase (649 aa).

Residues 189 to 192 (RGGK), threonine 311, and asparagine 335 each bind CoA. ATP contacts are provided by residues 387–389 (GEP), 411–416 (DTWWQT), aspartate 500, and arginine 515. Residue serine 523 participates in CoA binding. Arginine 526 provides a ligand contact to ATP. Residues valine 537, histidine 539, and valine 542 each contribute to the Mg(2+) site. Residue arginine 584 participates in CoA binding. The residue at position 609 (lysine 609) is an N6-acetyllysine.

Belongs to the ATP-dependent AMP-binding enzyme family. Requires Mg(2+) as cofactor. In terms of processing, acetylated. Deacetylation by the SIR2-homolog deacetylase activates the enzyme.

It catalyses the reaction acetate + ATP + CoA = acetyl-CoA + AMP + diphosphate. Functionally, catalyzes the conversion of acetate into acetyl-CoA (AcCoA), an essential intermediate at the junction of anabolic and catabolic pathways. AcsA undergoes a two-step reaction. In the first half reaction, AcsA combines acetate with ATP to form acetyl-adenylate (AcAMP) intermediate. In the second half reaction, it can then transfer the acetyl group from AcAMP to the sulfhydryl group of CoA, forming the product AcCoA. In Sinorhizobium fredii (strain NBRC 101917 / NGR234), this protein is Acetyl-coenzyme A synthetase.